The sequence spans 539 residues: uncharacterized protein (539 aa).

The tract at residues 34–63 (AASEVSPIPQERPTTSLRKPTPRVQRPATD) is disordered. Transmembrane regions (helical) follow at residues 103-123 (FATP…TTVF), 141-161 (MTAT…LDTV), 184-204 (ILLL…GILL), 244-264 (GIFH…IFLN), 277-299 (FLGA…IIYI), 325-345 (LAVP…LVTF), 360-380 (VLST…AAAA), 399-419 (THVS…ILFL), 434-454 (VVAL…ADNT), 470-490 (IGGV…AIIL), and 496-516 (WGLY…AGVE).

The protein belongs to the multi antimicrobial extrusion (MATE) (TC 2.A.66.1) family.

It localises to the vacuole membrane. This is an uncharacterized protein from Schizosaccharomyces pombe (strain 972 / ATCC 24843) (Fission yeast).